The following is a 137-amino-acid chain: ATP synthase epsilon chain (137 aa).

It belongs to the ATPase epsilon chain family. In terms of assembly, F-type ATPases have 2 components, CF(1) - the catalytic core - and CF(0) - the membrane proton channel. CF(1) has five subunits: alpha(3), beta(3), gamma(1), delta(1), epsilon(1). CF(0) has three main subunits: a, b and c.

The protein resides in the cellular thylakoid membrane. Its function is as follows. Produces ATP from ADP in the presence of a proton gradient across the membrane. This Nostoc sp. (strain PCC 7120 / SAG 25.82 / UTEX 2576) protein is ATP synthase epsilon chain (atpC).